The primary structure comprises 442 residues: Citrate transporter CitP (442 aa).

The next 13 membrane-spanning stretches (helical) occupy residues 27–47 (ISGIGLIAYAFMAVLLIIAIS), 59–79 (IFALVLMGHVFYYLGAHLPIF), 83–103 (LGGGSVFTILLTAILVATNVI), 114–134 (FINGMDFLGLYIVSLIASSLF), 151–171 (VAFISMALTAVVIGIVGVIIG), 177–197 (AILYIAMPIMAGGVGAGIVPL), 209–229 (SAGILSKLFPTVILGNLLAII), 267–287 (YVQLGVGLIIAVMFFMIGTML), 293–313 (GINAYAFIILSIVLTKAFGLL), 321–341 (VIMFGQVIVKNMTHALLAGVG), 349–369 (VLLAALSWQFVVLCLVSIVAI), 387–409 (AAITAGLANNSMGGTGNVAVLAA), and 421–441 (MGNRIGGALILVVAGILVTFM).

This sequence belongs to the 2-hydroxycarboxylate transporter (2-HCT) (TC 2.A.24) family.

The protein localises to the cell membrane. It catalyses the reaction (R)-lactate(in) + citrate(out) = (R)-lactate(out) + citrate(in). The catalysed reaction is (S)-lactate(in) + citrate(out) = (S)-lactate(out) + citrate(in). The enzyme catalyses citrate(in) + H(+)(in) = citrate(out) + H(+)(out). With respect to regulation, the transport of citrate is unaffected by the presence of citrate in the growth media. Its function is as follows. Secondary transporter involved in citrate metabolism. During cometabolism of citrate and glucose, catalyzes the uptake of divalent citrate into the cell coupled to the exit of monovalent lactate, the end product of glycolysis in L.lactis. The citrate/lactate exchange is electrogenic and results in the generation of a membrane potential. Plays an important role in resistance against lactate toxicity at low pH. In the absence of glucose, i.e. when no lactate is produced, CitP catalyzes the uptake of citrate in exchange with the citrate metabolism intermediates pyruvate and alpha-acetolactate, and the end product acetate. In the absence of glucose, CitP can also catalyze the proton-dependent transport of citrate. In vitro, shows a broad substrate specificity. Can transport a wide variety of mono- and dicarboxylates of the form X-CR(2)-COO(-), where X represents OH (2-hydroxy acid), O (2-keto acid), or H (acid) and R groups differ in size, hydrophobicity and composition. Many of the substrates are intermediates or products of amino acid metabolism, suggesting that CitP may have a broader physiological function than its role in citrate metabolism. The chain is Citrate transporter CitP from Lactococcus lactis subsp. lactis (Streptococcus lactis).